Consider the following 117-residue polypeptide: uncharacterized protein (117 aa).

This is an uncharacterized protein from Escherichia coli O6:H1 (strain CFT073 / ATCC 700928 / UPEC).